Here is a 477-residue protein sequence, read N- to C-terminus: Glycogen synthase (477 aa).

Position 15 (Lys15) interacts with ADP-alpha-D-glucose.

Belongs to the glycosyltransferase 1 family. Bacterial/plant glycogen synthase subfamily.

The catalysed reaction is [(1-&gt;4)-alpha-D-glucosyl](n) + ADP-alpha-D-glucose = [(1-&gt;4)-alpha-D-glucosyl](n+1) + ADP + H(+). The protein operates within glycan biosynthesis; glycogen biosynthesis. Its function is as follows. Synthesizes alpha-1,4-glucan chains using ADP-glucose. The protein is Glycogen synthase of Edwardsiella ictaluri (strain 93-146).